Reading from the N-terminus, the 444-residue chain is C4-dicarboxylate transport protein (444 aa).

Transmembrane regions (helical) follow at residues 15-35 (VIVA…FGVA), 46-66 (LIKM…IAGM), 78-98 (YALL…LIVV), 143-163 (IVGA…VIFG), 199-219 (PIGA…GSLV), 224-244 (LMIC…GGIA), 291-311 (VVGL…AIYL), 332-352 (ITLL…TGSG), and 354-374 (IVLA…LALI). Residues 422–444 (GIADTRPEDDLGVAEGPTPSNVK) are disordered.

Belongs to the dicarboxylate/amino acid:cation symporter (DAACS) (TC 2.A.23) family.

The protein resides in the cell inner membrane. In terms of biological role, responsible for the transport of dicarboxylates such as succinate, fumarate, and malate from the periplasm across the membrane. The chain is C4-dicarboxylate transport protein from Pseudomonas fluorescens (strain Pf0-1).